We begin with the raw amino-acid sequence, 153 residues long: Regulator of ribonuclease activity B (153 aa).

The tract at residues 114–153 is disordered; it reads DPNADDDEYGDDGEFLDDEDEYGDDGEFFDDEDEEEPRVH. The segment covering 115–153 has biased composition (acidic residues); it reads PNADDDEYGDDGEFLDDEDEYGDDGEFFDDEDEEEPRVH.

This sequence belongs to the RraB family. In terms of assembly, interacts with the C-terminal region of Rne.

Its subcellular location is the cytoplasm. Functionally, globally modulates RNA abundance by binding to RNase E (Rne) and regulating its endonucleolytic activity. Can modulate Rne action in a substrate-dependent manner by altering the composition of the degradosome. This is Regulator of ribonuclease activity B from Haemophilus influenzae (strain ATCC 51907 / DSM 11121 / KW20 / Rd).